The primary structure comprises 886 residues: 3',5'-cyclic-AMP phosphodiesterase 4A (886 aa).

The interval 1–128 (MEPPTVPSER…GRSPLDSQAS (128 aa)) is disordered. Ser-13 carries the post-translational modification Phosphoserine. The span at 36-46 (QPRTPIRIQQR) shows a compositional bias: low complexity. Residues 51 to 78 (SAERAERERQPHRPIERADAMDTSDRPG) are compositionally biased toward basic and acidic residues. Residues 93–104 (TGTGSGGAGGGS) are compositionally biased toward gly residues. 2 positions are modified to phosphoserine: Gly-119 and Leu-123. Ser-152 carries the post-translational modification Phosphoserine; by MAPKAPK2. Phosphoserine is present on residues Ser-157, Ser-165, and Ser-209. The interval 294–331 (KQNEVEIPSPTMKEREKQQAPRPRPSQPPPPPVPHLQP) is disordered. Pro residues predominate over residues 315 to 328 (RPRPSQPPPPPVPH). Ser-346 bears the Phosphoserine mark. Positions 357–686 (VKTDQEELLA…DWYYSAIRQS (330 aa)) constitute a PDEase domain. Residue Lys-358 forms a Glycyl lysine isopeptide (Lys-Gly) (interchain with G-Cter in SUMO) linkage. The active-site Proton donor is His-433. Residue His-433 participates in 3',5'-cyclic AMP binding. His-433 and His-437 together coordinate AMP. Positions 437, 473, 474, and 591 each coordinate Zn(2+). Asp-474, Asp-591, Gln-642, and Phe-645 together coordinate AMP. Mg(2+) is bound at residue Asp-474. Asp-474 contacts Mn(2+). The 3',5'-cyclic AMP site is built by Gln-642 and Phe-645. Disordered stretches follow at residues 682–705 (AIRQSPSPPPEEESRGPGHPPLPD) and 866–886 (FGEDTSALPAPGGGGSGGDPT). 2 positions are modified to phosphoserine: Ser-686 and Ser-688. The span at 876-886 (PGGGGSGGDPT) shows a compositional bias: gly residues.

The protein belongs to the cyclic nucleotide phosphodiesterase family. PDE4 subfamily. As to quaternary structure, interacts with LYN (via SH3 domain). Interacts with ARRB2. The cofactor is Zn(2+). Mg(2+) is required as a cofactor. It depends on Mn(2+) as a cofactor. In terms of processing, proteolytically cleaved by CASP3. Post-translationally, phosphorylated at Ser-119 by PKA. As to expression, expressed in lymphoid cell subsets including CD8-positive T cells and T-helper 2 cells. Expressed in dendritic cells. In terms of tissue distribution, highly expressed in liver, stomach, testis, thyroid and adrenal glands and at a lower extent in placenta, kidney, pancreas, ovary, uterus and skin. Expressed in myeloid cell subsets including dendritic cells, monocytes, macrophages, eosinophils and mast cells. Expressed in natural killer cells. Expressed in bronchial smooth muscle. Expressed at high levels in the heart and small intestine. It is also found in the brain, kidney, spleen, colon, salivary gland, ovary and peripheral blood lymphocytes. As to expression, expressed predominantly in skeletal muscle and brain and at lower levels in the testis. Found in specific neuronal subpopulations including cortical pyramidal neurons, horn neurons in the spinal cord and Purkinje cells in cerebellum (at protein level).

It is found in the cytoplasm. Its subcellular location is the perinuclear region. The protein localises to the cell projection. The protein resides in the ruffle membrane. It localises to the cytosol. It is found in the membrane. The enzyme catalyses 3',5'-cyclic AMP + H2O = AMP + H(+). The protein operates within purine metabolism; 3',5'-cyclic AMP degradation; AMP from 3',5'-cyclic AMP: step 1/1. With respect to regulation, inhibited by rolipram, cilomilast, Ro 20-1724, roflumilast and denbufylline. Its activity is regulated as follows. Inhibited by rolipram. Inhibited by rolipram and cilomilast. Hydrolyzes the second messenger 3',5'-cyclic AMP (cAMP), which is a key regulator of many important physiological processes. Its function is as follows. Efficiently hydrolyzes cAMP. Functionally, efficiently hydrolyzes cAMP. The phosphodiesterase activity is not affected by calcium, calmodulin or cyclic GMP (cGMP) levels. Does not hydrolyze cGMP. The chain is 3',5'-cyclic-AMP phosphodiesterase 4A (PDE4A) from Homo sapiens (Human).